The following is a 170-amino-acid chain: Probable calcium-binding protein CML29 (170 aa).

3 consecutive EF-hand domains span residues 27-62 (SYISSLVEAFQAFDSDNDGLVTAPELRGLLASLGLD), 63-98 (KPEHEVRDMLARADADRDGKLSVEELLDVMNAGQLG), and 138-170 (ASVEDCMEIIACMDGDGDGAISVEEFRLMAQLL). The Ca(2+) site is built by Asp40, Asp42, Asp44, Glu51, Asp76, Asp78, Asp80, Lys82, Glu87, Asp151, Asp153, Asp155, and Glu162.

Potential calcium sensor. The sequence is that of Probable calcium-binding protein CML29 (CML29) from Oryza sativa subsp. japonica (Rice).